The following is a 276-amino-acid chain: Diaminopimelate epimerase (276 aa).

Residues asparagine 13, glutamine 46, and asparagine 66 each contribute to the substrate site. Cysteine 75 acts as the Proton donor in catalysis. Substrate is bound by residues 76–77 (GN), asparagine 159, asparagine 192, and 210–211 (ER). The Proton acceptor role is filled by cysteine 219. 220 to 221 (GT) lines the substrate pocket.

Belongs to the diaminopimelate epimerase family. In terms of assembly, homodimer.

It localises to the cytoplasm. It catalyses the reaction (2S,6S)-2,6-diaminopimelate = meso-2,6-diaminopimelate. It participates in amino-acid biosynthesis; L-lysine biosynthesis via DAP pathway; DL-2,6-diaminopimelate from LL-2,6-diaminopimelate: step 1/1. Catalyzes the stereoinversion of LL-2,6-diaminopimelate (L,L-DAP) to meso-diaminopimelate (meso-DAP), a precursor of L-lysine and an essential component of the bacterial peptidoglycan. This is Diaminopimelate epimerase from Pseudomonas entomophila (strain L48).